Here is a 397-residue protein sequence, read N- to C-terminus: N-acetyllactosaminide beta-1,3-N-acetylglucosaminyltransferase 2 (397 aa).

The Cytoplasmic segment spans residues 1–7; sequence MSVGRRR. Residues 8–28 form a helical; Signal-anchor for type II membrane protein membrane-spanning segment; it reads IKLLGILMMANVFIYFIMEVS. Residues 29–397 lie on the Lumenal side of the membrane; the sequence is KSSSQEKNGK…SQLQSAHLKC (369 aa). N-linked (GlcNAc...) asparagine glycans are attached at residues N79, N89, N127, N173, and N219.

This sequence belongs to the glycosyltransferase 31 family. In terms of assembly, interacts with B3GNT8; this interaction greatly increases B3GNT2 catalytic activity, independently of B3GNT8 enzymatic activity. Requires Mn(2+) as cofactor. Ubiquitous.

It is found in the golgi apparatus membrane. It catalyses the reaction a beta-D-galactosyl-(1-&gt;4)-N-acetyl-beta-D-glucosaminyl derivative + UDP-N-acetyl-alpha-D-glucosamine = an N-acetyl-beta-D-glucosaminyl-(1-&gt;3)-beta-D-galactosyl-(1-&gt;4)-N-acetyl-beta-D-glucosaminyl derivative + UDP + H(+). The protein operates within protein modification; protein glycosylation. In terms of biological role, beta-1,3-N-acetylglucosaminyltransferase involved in the synthesis of poly-N-acetyllactosamine. Catalyzes the initiation and elongation of poly-N-acetyllactosamine chains. Shows a marked preference for Gal(beta1-4)Glc(NAc)-based acceptors. Probably constitutes the main polylactosamine synthase. The chain is N-acetyllactosaminide beta-1,3-N-acetylglucosaminyltransferase 2 (B3GNT2) from Homo sapiens (Human).